Here is a 622-residue protein sequence, read N- to C-terminus: Cilia- and flagella-associated protein 206 (622 aa).

A disordered region spans residues 571 to 592 (QVYPPKDTSTQSMREDSTGVPR).

It belongs to the CFAP206 family.

It localises to the cytoplasm. It is found in the cytoskeleton. The protein localises to the cilium axoneme. Its subcellular location is the cilium basal body. Essential for sperm motility and is involved in the regulation of the beating frequency of motile cilia on the epithelial cells of the respiratory tract. Required for the establishment of radial spokes in sperm flagella. The sequence is that of Cilia- and flagella-associated protein 206 from Macaca fascicularis (Crab-eating macaque).